The chain runs to 459 residues: tRNA modification GTPase MnmE (459 aa).

(6S)-5-formyl-5,6,7,8-tetrahydrofolate-binding residues include Arg-22, Glu-85, and Arg-124. Residues 221-380 (GLSTVIVGKP…LELQIRDLFF (160 aa)) form the TrmE-type G domain. Asn-231 serves as a coordination point for K(+). GTP-binding positions include 231–236 (NVGKSS), 250–256 (TEVAGTT), and 275–278 (DTAG). Residue Ser-235 coordinates Mg(2+). Positions 250, 252, and 255 each coordinate K(+). Residue Thr-256 coordinates Mg(2+). Lys-459 lines the (6S)-5-formyl-5,6,7,8-tetrahydrofolate pocket.

It belongs to the TRAFAC class TrmE-Era-EngA-EngB-Septin-like GTPase superfamily. TrmE GTPase family. Homodimer. Heterotetramer of two MnmE and two MnmG subunits. The cofactor is K(+).

Its subcellular location is the cytoplasm. Its function is as follows. Exhibits a very high intrinsic GTPase hydrolysis rate. Involved in the addition of a carboxymethylaminomethyl (cmnm) group at the wobble position (U34) of certain tRNAs, forming tRNA-cmnm(5)s(2)U34. The protein is tRNA modification GTPase MnmE of Staphylococcus haemolyticus (strain JCSC1435).